The chain runs to 495 residues: UDP-N-acetylmuramoyl-L-alanyl-D-glutamate--2,6-diaminopimelate ligase (495 aa).

UDP-N-acetyl-alpha-D-muramoyl-L-alanyl-D-glutamate contacts are provided by residues Leu-27, Ser-29, and 44 to 46 (HQA). Residue 116-122 (GTNGKTT) coordinates ATP. Residues Asn-157, 158 to 159 (TT), Ser-185, Gln-191, and Arg-193 each bind UDP-N-acetyl-alpha-D-muramoyl-L-alanyl-D-glutamate. Position 225 is an N6-carboxylysine (Lys-225). Meso-2,6-diaminopimelate is bound by residues Arg-390, 414 to 417 (DNPR), Gly-465, and Glu-469. Residues 414-417 (DNPR) carry the Meso-diaminopimelate recognition motif motif.

It belongs to the MurCDEF family. MurE subfamily. Mg(2+) is required as a cofactor. In terms of processing, carboxylation is probably crucial for Mg(2+) binding and, consequently, for the gamma-phosphate positioning of ATP.

It localises to the cytoplasm. The catalysed reaction is UDP-N-acetyl-alpha-D-muramoyl-L-alanyl-D-glutamate + meso-2,6-diaminopimelate + ATP = UDP-N-acetyl-alpha-D-muramoyl-L-alanyl-gamma-D-glutamyl-meso-2,6-diaminopimelate + ADP + phosphate + H(+). The protein operates within cell wall biogenesis; peptidoglycan biosynthesis. In terms of biological role, catalyzes the addition of meso-diaminopimelic acid to the nucleotide precursor UDP-N-acetylmuramoyl-L-alanyl-D-glutamate (UMAG) in the biosynthesis of bacterial cell-wall peptidoglycan. In Salmonella choleraesuis (strain SC-B67), this protein is UDP-N-acetylmuramoyl-L-alanyl-D-glutamate--2,6-diaminopimelate ligase.